The chain runs to 559 residues: Thermosome subunit alpha (559 aa).

The segment covering 535 to 547 (SEKKGGEGSKEES) has biased composition (basic and acidic residues). Residues 535–559 (SEKKGGEGSKEESGGEGGSTPSLGD) are disordered.

This sequence belongs to the TCP-1 chaperonin family. In terms of assembly, forms a Heterooligomeric complex of two stacked eight-membered rings.

In terms of biological role, molecular chaperone; binds unfolded polypeptides in vitro, and has a weak ATPase activity. The polypeptide is Thermosome subunit alpha (thsA) (Saccharolobus solfataricus (strain ATCC 35092 / DSM 1617 / JCM 11322 / P2) (Sulfolobus solfataricus)).